Reading from the N-terminus, the 201-residue chain is Holliday junction branch migration complex subunit RuvA (201 aa).

The interval 1–65 (MIAYIEGRVA…EDALELYGFS (65 aa)) is domain I. Residues 66 to 143 (GWDERQTFLV…KVESLPASAG (78 aa)) form a domain II region. A flexible linker region spans residues 143–147 (GLAAG). Residues 148–201 (VPGSVLRDAVQALGNLGYAEEEAAPVLKNILKQDPDLDVSEALRAALKALAKAR) are domain III.

It belongs to the RuvA family. As to quaternary structure, homotetramer. Forms an RuvA(8)-RuvB(12)-Holliday junction (HJ) complex. HJ DNA is sandwiched between 2 RuvA tetramers; dsDNA enters through RuvA and exits via RuvB. An RuvB hexamer assembles on each DNA strand where it exits the tetramer. Each RuvB hexamer is contacted by two RuvA subunits (via domain III) on 2 adjacent RuvB subunits; this complex drives branch migration. In the full resolvosome a probable DNA-RuvA(4)-RuvB(12)-RuvC(2) complex forms which resolves the HJ.

Its subcellular location is the cytoplasm. Functionally, the RuvA-RuvB-RuvC complex processes Holliday junction (HJ) DNA during genetic recombination and DNA repair, while the RuvA-RuvB complex plays an important role in the rescue of blocked DNA replication forks via replication fork reversal (RFR). RuvA specifically binds to HJ cruciform DNA, conferring on it an open structure. The RuvB hexamer acts as an ATP-dependent pump, pulling dsDNA into and through the RuvAB complex. HJ branch migration allows RuvC to scan DNA until it finds its consensus sequence, where it cleaves and resolves the cruciform DNA. This is Holliday junction branch migration complex subunit RuvA from Oleidesulfovibrio alaskensis (strain ATCC BAA-1058 / DSM 17464 / G20) (Desulfovibrio alaskensis).